The following is a 602-amino-acid chain: Aspartate--tRNA(Asp/Asn) ligase (602 aa).

Residue Glu170 coordinates L-aspartate. The tract at residues 194–197 (QLFK) is aspartate. An L-aspartate-binding site is contributed by Arg216. Residues 216 to 218 (RDE) and Gln225 each bind ATP. His448 serves as a coordination point for L-aspartate. Glu482 is a binding site for ATP. Arg489 lines the L-aspartate pocket. Residue 534-537 (GWDR) coordinates ATP. Residues 559–602 (GGVDPLTNAPAPITAQQRKESGVDAKPEPKGDAASAKPDAPADK) are disordered. The span at 575 to 589 (QRKESGVDAKPEPKG) shows a compositional bias: basic and acidic residues. The segment covering 590-602 (DAASAKPDAPADK) has biased composition (low complexity).

Belongs to the class-II aminoacyl-tRNA synthetase family. Type 1 subfamily. As to quaternary structure, homodimer.

It is found in the cytoplasm. The enzyme catalyses tRNA(Asx) + L-aspartate + ATP = L-aspartyl-tRNA(Asx) + AMP + diphosphate. In terms of biological role, aspartyl-tRNA synthetase with relaxed tRNA specificity since it is able to aspartylate not only its cognate tRNA(Asp) but also tRNA(Asn). Reaction proceeds in two steps: L-aspartate is first activated by ATP to form Asp-AMP and then transferred to the acceptor end of tRNA(Asp/Asn). The sequence is that of Aspartate--tRNA(Asp/Asn) ligase from Rhodococcus jostii (strain RHA1).